Here is a 220-residue protein sequence, read N- to C-terminus: Putative threonylcarbamoyl-AMP synthase (220 aa).

The YrdC-like domain maps to 17–202 (ARGIASAVAA…TPRILRAGPV (186 aa)).

Belongs to the SUA5 family.

It is found in the cytoplasm. The enzyme catalyses L-threonine + hydrogencarbonate + ATP = L-threonylcarbamoyladenylate + diphosphate + H2O. Required for the formation of a threonylcarbamoyl group on adenosine at position 37 (t(6)A37) in tRNAs that read codons beginning with adenine. Catalyzes the conversion of L-threonine, HCO(3)(-)/CO(2) and ATP to give threonylcarbamoyl-AMP (TC-AMP) as the acyladenylate intermediate, with the release of diphosphate. In Mycobacterium leprae (strain TN), this protein is Putative threonylcarbamoyl-AMP synthase.